Reading from the N-terminus, the 211-residue chain is Large ribosomal subunit protein uL4 (211 aa).

The interval 42-87 (AHMRQGTASTLTRSEVRGGGRKPYKQKGTGRARQGSVRTPLRPGGG) is disordered. Over residues 60–71 (GGRKPYKQKGTG) the composition is skewed to basic residues.

It belongs to the universal ribosomal protein uL4 family. In terms of assembly, part of the 50S ribosomal subunit.

One of the primary rRNA binding proteins, this protein initially binds near the 5'-end of the 23S rRNA. It is important during the early stages of 50S assembly. It makes multiple contacts with different domains of the 23S rRNA in the assembled 50S subunit and ribosome. In terms of biological role, forms part of the polypeptide exit tunnel. The sequence is that of Large ribosomal subunit protein uL4 from Synechococcus sp. (strain CC9902).